Here is a 609-residue protein sequence, read N- to C-terminus: Arginine--tRNA ligase (609 aa).

The 'HIGH' region signature appears at 132–142 (ANPTSSLHVGH).

This sequence belongs to the class-I aminoacyl-tRNA synthetase family. In terms of assembly, monomer.

Its subcellular location is the cytoplasm. It carries out the reaction tRNA(Arg) + L-arginine + ATP = L-arginyl-tRNA(Arg) + AMP + diphosphate. The sequence is that of Arginine--tRNA ligase from Psychrobacter cryohalolentis (strain ATCC BAA-1226 / DSM 17306 / VKM B-2378 / K5).